We begin with the raw amino-acid sequence, 348 residues long: MMHAVIDALCAGVDLSAEQTEALFRDLIAGALTEIELSALFVALKAKGETPAEIAGAARALRGTSVPFARPAYVYADCCGTGGDGQSTVNVSTAVAFVAAEAGLPVAKHGNRSVSSQCGSADALEALGARLDPPAEVSRRALDEVGFCFLFAPQYHAGLRHAMPVRRALKVRTIMNLLGPLVNPSAPPIQVMGIYDPELVTHAARTLGMLGCQAALVVHGGGLDEVALHAPTRAARLRDGVVEELLIDPADAGVAPAPIEALRGAGPAANAAWLRDLLAGRGAPAHRDAVAINAGALLWIAGRAEGLREGTALALEALGSGRAAERLTRFVALSRDGAQEARKEAKHG.

Residues Gly-80, 83-84 (GD), Thr-88, 90-93 (NVST), 108-116 (KHGNRSVSS), and Ser-120 each bind 5-phospho-alpha-D-ribose 1-diphosphate. Gly-80 provides a ligand contact to anthranilate. Ser-92 is a binding site for Mg(2+). Asn-111 provides a ligand contact to anthranilate. Arg-166 is an anthranilate binding site. Mg(2+)-binding residues include Asp-224 and Glu-225.

The protein belongs to the anthranilate phosphoribosyltransferase family. As to quaternary structure, homodimer. Mg(2+) serves as cofactor.

The catalysed reaction is N-(5-phospho-beta-D-ribosyl)anthranilate + diphosphate = 5-phospho-alpha-D-ribose 1-diphosphate + anthranilate. Its pathway is amino-acid biosynthesis; L-tryptophan biosynthesis; L-tryptophan from chorismate: step 2/5. Its function is as follows. Catalyzes the transfer of the phosphoribosyl group of 5-phosphorylribose-1-pyrophosphate (PRPP) to anthranilate to yield N-(5'-phosphoribosyl)-anthranilate (PRA). The chain is Anthranilate phosphoribosyltransferase from Sorangium cellulosum (strain So ce56) (Polyangium cellulosum (strain So ce56)).